Reading from the N-terminus, the 214-residue chain is Ion-translocating oxidoreductase complex subunit G (214 aa).

The chain crosses the membrane as a helical span at residues 13–33 (ALLLGLFALVGVGLVALVQQF). T180 bears the FMN phosphoryl threonine mark.

This sequence belongs to the RnfG family. As to quaternary structure, the complex is composed of six subunits: RnfA, RnfB, RnfC, RnfD, RnfE and RnfG. The cofactor is FMN.

The protein resides in the cell inner membrane. Functionally, part of a membrane-bound complex that couples electron transfer with translocation of ions across the membrane. The polypeptide is Ion-translocating oxidoreductase complex subunit G (Pseudomonas aeruginosa (strain UCBPP-PA14)).